The sequence spans 291 residues: MERLFCVPCGYGTTDPLTYPGPWRHCQQQNWPQNMGAPIFLARLRVPANVSQSCMNPYNRAQLQAVSTQMDPNLSLWLRSVHTTEVGVQVSLRVDKSVQCSQGSQTLHSSSLSDRTSSRKPTEAWEVGRRALIRRPQDGEDEESQEELTGPTEASQLLLPTWSRDREEQFPRLKELGEEYAHSPQDRKGKQFLELKYGYFHCKDCKRRWESAYVWCISGTNKVYFKQLCNKCQKSFNPYRVEEIQCQTCLRVCCSCSPKKRHIDVRRPHRQELCGHCKDKKFSCSVFFSLK.

Residues 103 to 152 (GSQTLHSSSLSDRTSSRKPTEAWEVGRRALIRRPQDGEDEESQEELTGPT) form a disordered region. Residues 106–115 (TLHSSSLSDR) show a composition bias toward low complexity. Basic and acidic residues predominate over residues 116-129 (TSSRKPTEAWEVGR). Residues 195-280 (LKYGYFHCKD…QELCGHCKDK (86 aa)) form a 3CxxC-type zinc finger.

Belongs to the ZAR1 family. Interacts with YBX2. As to expression, expressed in oocytes and zygotes. Predominantly expressed in maturing oocytes before maternal-to-zygotic transition (MZT). Less abundant than Zar1.

It localises to the cytoplasm. The protein resides in the cytoplasmic ribonucleoprotein granule. MRNA-binding protein required for maternal mRNA storage, translation and degradation during oocyte maturation. Probably promotes formation of some phase-separated membraneless compartment that stores maternal mRNAs in oocytes: acts by undergoing liquid-liquid phase separation upon binding to maternal mRNAs. Binds to the 3'-UTR of maternal mRNAs, inhibiting their translation. This Mus musculus (Mouse) protein is Protein ZAR1-like.